Here is a 274-residue protein sequence, read N- to C-terminus: Kit ligand (274 aa).

The N-terminal stretch at 1 to 25 is a signal peptide; it reads MKKTQTWIITCIYLQLLLFNPLVKT. Residues 26–215 are Extracellular-facing; sequence KGICENRVTD…SNFTGDSNLQ (190 aa). 2 disulfides stabilise this stretch: C29/C114 and C68/C164. Residues N90, N97, N145, N196, and N207 are each glycosylated (N-linked (GlcNAc...) asparagine). The chain crosses the membrane as a helical span at residues 216-238; it reads WAAMALPAFFSLVIGFAFGALYW. Over 239–274 the chain is Cytoplasmic; the sequence is KKKQPNLTRAVENIQINEEDNEISMLQEKEREFQEV.

This sequence belongs to the SCF family. As to quaternary structure, homodimer, non-covalently linked. A soluble form is produced by proteolytic processing of the extracellular domain.

It localises to the cytoplasm. Its subcellular location is the cytoskeleton. It is found in the cell membrane. The protein resides in the cell projection. The protein localises to the lamellipodium. It localises to the filopodium. Its subcellular location is the secreted. In terms of biological role, stimulates the proliferation of mast cells. Able to augment the proliferation of both myeloid and lymphoid hematopoietic progenitors in bone marrow culture. Also mediates cell-cell adhesion. Acts synergistically with other cytokines, probably interleukins. The sequence is that of Kit ligand (KITLG) from Equus caballus (Horse).